Consider the following 302-residue polypeptide: uncharacterized protein (302 aa).

The HTH lysR-type domain occupies 1–60 (MRMNMSDFATFFAVARNQSFRAAGDELGLSSSAISHSIKTLEQRLKIRLFNRTTRSVSLT). Positions 20–40 (FRAAGDELGLSSSAISHSIKT) form a DNA-binding region, H-T-H motif.

The protein belongs to the LysR transcriptional regulatory family.

This is an uncharacterized protein from Escherichia coli (strain K12).